We begin with the raw amino-acid sequence, 320 residues long: MRPPLTGSGGGFSGGRGRGGYSGGRGDGGFSGGRGGGGRGGGRGFSDRGGRGRGRGPPRGGARGGRGPAGRGGMKGGSKVIVEPHRHAGVFIAKGKEDALVTKNLVPGEAVYNEKRISVQNEDGTKTEYRVWNPFRSKLAAAILGGVDNIWIKPGAKVLYLGAASGTTVSHVSDLVGPEGCVYAVEFSHRSGRDLVNMAKKRTNVIPIIEDARHPAKYRMLVGMVDVIFSDVAQPDQARILALNASYFLKSGGHFVISIKANCIDSTVPAEAVFQTEVKKLQQEQFKPAEQVTLEPFERDHACVVGGYRMPKKPKAATAA.

The interval 1 to 79 (MRPPLTGSGG…GRGGMKGGSK (79 aa)) is disordered. Gly residues-rich tracts occupy residues 7-44 (GSGGGFSGGRGRGGYSGGRGDGGFSGGRGGGGRGGGRG) and 57-76 (PPRGGARGGRGPAGRGGMKG). S-adenosyl-L-methionine-binding positions include 167–168 (TT), 186–187 (EF), 211–212 (DA), and 231–234 (DVAQ).

Belongs to the methyltransferase superfamily. Fibrillarin family. As to quaternary structure, component of box C/D small nucleolar ribonucleoprotein (snoRNP) particles. Interacts with groundnut rosette virus long-distance movement protein; this interaction is required for virus long-distance movement protein transiting through host Cajal body and nucleolus, relocalization of fibrillarin to the cytoplasm, and in presence of viral RNA, leads to the formation of stable RNPs. Interacts (via GAR domain) with the hordeivirus TGB1 movement protein (via the first 82 amino acid residues). Interacts with PRMT11 and PRMT12. Interacts with MED19A. Post-translationally, methylated by PRMT11 and PRMT12. Expressed in roots and flowers. Expressed in leaves and stems. Expression levels decrease during aging.

It localises to the nucleus. Its subcellular location is the nucleolus. The catalysed reaction is a ribonucleotide in rRNA + S-adenosyl-L-methionine = a 2'-O-methylribonucleotide in rRNA + S-adenosyl-L-homocysteine + H(+). It catalyses the reaction L-glutaminyl-[histone H2A] + S-adenosyl-L-methionine = N(5)-methyl-L-glutaminyl-[histone H2A] + S-adenosyl-L-homocysteine + H(+). In terms of biological role, S-adenosyl-L-methionine-dependent methyltransferase that has the ability to methylate both RNAs and proteins. Involved in pre-rRNA processing. Utilizes the methyl donor S-adenosyl-L-methionine to catalyze the site-specific 2'-hydroxyl methylation of ribose moieties in pre-ribosomal RNA. Site specificity is provided by a guide RNA that base pairs with the substrate. Methylation occurs at a characteristic distance from the sequence involved in base pairing with the guide RNA. Also acts as a protein methyltransferase by mediating methylation of 'Gln-105' of histone H2A (H2AQ105me), a modification that impairs binding of the FACT complex and is specifically present at 35S ribosomal DNA locus. Acts as a negative regulator of expression of immune responsive genes, including pathogenesis-related gene 1 (PR1), and of resistance against bacterial pathogen. Binds to MED19A, a positive regulator of PR1 expression, to repress the activator activity of MED19A. In response to the bacterial pathogen-associated molecular pattern (PAMP) elf18, associates with the long non-coding RNA (lncRNA) ELENA1 (At4g16355), and releases its repression of MED19A. Possesses ribonuclease activity toward rRNA in vitro. Binds phosphoinositides, phospholipids and phosphatidic acid in vitro. The polypeptide is rRNA 2'-O-methyltransferase fibrillarin 2 (Arabidopsis thaliana (Mouse-ear cress)).